Here is a 269-residue protein sequence, read N- to C-terminus: Glutamate 5-kinase (269 aa).

Lysine 14 is an ATP binding site. Residues serine 54, aspartate 141, and asparagine 157 each coordinate substrate. ATP-binding positions include 177 to 178 and 219 to 225; these read SD and TGGMVTK.

The protein belongs to the glutamate 5-kinase family.

The protein localises to the cytoplasm. It catalyses the reaction L-glutamate + ATP = L-glutamyl 5-phosphate + ADP. It functions in the pathway amino-acid biosynthesis; L-proline biosynthesis; L-glutamate 5-semialdehyde from L-glutamate: step 1/2. Functionally, catalyzes the transfer of a phosphate group to glutamate to form L-glutamate 5-phosphate. The chain is Glutamate 5-kinase from Clostridium perfringens (strain 13 / Type A).